A 219-amino-acid chain; its full sequence is MNRIFGKSKPKVPPPTLTDCITNVDGRAESIEKKISRLDAELIKYKDQMKKMREGPSKNMVKQKALRVLKQKRMYEQQRDNLNQQSFNMEQANYTIQTLKDTKTTVDAMKVGAKEMKKAYKQVKIDQIEDLQDQLEDMMENANEIQEALSRSYGTPEIDEDDLEAELDALGDELLLDDDTSYLDEAASAPAIPEGVPNDSKNKDGVLVDEFGLPQIPAT.

Positions 22–153 (TNVDGRAESI…EIQEALSRSY (132 aa)) form a coiled coil.

The protein belongs to the SNF7 family. As to quaternary structure, probable peripherally associated component of the endosomal sorting required for transport complex III (ESCRT-III).

Its subcellular location is the cytoplasm. It localises to the cytosol. The protein localises to the endosome membrane. Its function is as follows. Probable peripherally associated component of the endosomal sorting required for transport complex III (ESCRT-III) which is involved in multivesicular bodies (MVBs) formation and sorting of endosomal cargo proteins into MVBs. MVBs contain intraluminal vesicles (ILVs) that are generated by invagination and scission from the limiting membrane of the endosome and mostly are delivered to lysosomes enabling degradation of membrane proteins, such as stimulated growth factor receptors, lysosomal enzymes and lipids. This chain is Charged multivesicular body protein 5 (chmp5), found in Xenopus laevis (African clawed frog).